The following is a 106-amino-acid chain: Ribonuclease P protein component 4 (106 aa).

Zn(2+) contacts are provided by Cys62, Cys65, Cys88, and Cys91.

The protein belongs to the eukaryotic/archaeal RNase P protein component 4 family. Consists of a catalytic RNA component and at least 4-5 protein subunits. Requires Zn(2+) as cofactor.

The protein localises to the cytoplasm. The enzyme catalyses Endonucleolytic cleavage of RNA, removing 5'-extranucleotides from tRNA precursor.. Functionally, part of ribonuclease P, a protein complex that generates mature tRNA molecules by cleaving their 5'-ends. This Methanocorpusculum labreanum (strain ATCC 43576 / DSM 4855 / Z) protein is Ribonuclease P protein component 4.